Consider the following 392-residue polypeptide: uncharacterized protein (392 aa).

A mitochondrion-targeting transit peptide spans 1–34 (MCISSSSLLCGINSLKYASNRVGILIPPFQTASS). Helical transmembrane passes span 115–135 (VAIM…WHWD), 150–172 (FRFM…WWTL), 185–205 (LLVN…KFGV), 208–225 (ALSV…VALQ), 277–297 (ATFV…AVYA), 299–319 (AAIF…VYPV), 321–341 (AGIF…LNYE), and 350–370 (AHVS…PAMW). The Nucleophile role is filled by Ser-292. His-351 is an active-site residue.

It belongs to the peptidase S54 family.

It is found in the mitochondrion inner membrane. This is an uncharacterized protein from Schizosaccharomyces pombe (strain 972 / ATCC 24843) (Fission yeast).